The primary structure comprises 662 residues: ATP-dependent zinc metalloprotease YME1 homolog (662 aa).

206-213 (GPPGVGKT) serves as a coordination point for ATP. His-425 provides a ligand contact to Zn(2+). The active site involves Glu-426. Zn(2+)-binding residues include His-429 and Asp-503.

This sequence in the N-terminal section; belongs to the AAA ATPase family. It in the C-terminal section; belongs to the peptidase M41 family. The cofactor is Zn(2+).

Functionally, putative ATP-dependent protease. This chain is ATP-dependent zinc metalloprotease YME1 homolog, found in Schistosoma mansoni (Blood fluke).